A 185-amino-acid polypeptide reads, in one-letter code: Large ribosomal subunit protein uL5 (185 aa).

It belongs to the universal ribosomal protein uL5 family. As to quaternary structure, part of the 50S ribosomal subunit; contacts the 5S rRNA and probably tRNA. Forms a bridge to the 30S subunit in the 70S ribosome.

Its function is as follows. This is one of the proteins that bind and probably mediate the attachment of the 5S RNA into the large ribosomal subunit, where it forms part of the central protuberance. In the 70S ribosome it contacts protein S13 of the 30S subunit (bridge B1b), connecting the 2 subunits; this bridge is implicated in subunit movement. May contact the P site tRNA; the 5S rRNA and some of its associated proteins might help stabilize positioning of ribosome-bound tRNAs. In Haloquadratum walsbyi (strain DSM 16790 / HBSQ001), this protein is Large ribosomal subunit protein uL5.